We begin with the raw amino-acid sequence, 256 residues long: Tryptophan synthase alpha chain (256 aa).

Catalysis depends on proton acceptor residues E51 and D62.

The protein belongs to the TrpA family. In terms of assembly, tetramer of two alpha and two beta chains.

The enzyme catalyses (1S,2R)-1-C-(indol-3-yl)glycerol 3-phosphate + L-serine = D-glyceraldehyde 3-phosphate + L-tryptophan + H2O. It participates in amino-acid biosynthesis; L-tryptophan biosynthesis; L-tryptophan from chorismate: step 5/5. In terms of biological role, the alpha subunit is responsible for the aldol cleavage of indoleglycerol phosphate to indole and glyceraldehyde 3-phosphate. In Solidesulfovibrio magneticus (strain ATCC 700980 / DSM 13731 / RS-1) (Desulfovibrio magneticus), this protein is Tryptophan synthase alpha chain.